Reading from the N-terminus, the 100-residue chain is Urease subunit gamma (100 aa).

This sequence belongs to the urease gamma subunit family. As to quaternary structure, heterotrimer of UreA (gamma), UreB (beta) and UreC (alpha) subunits. Three heterotrimers associate to form the active enzyme.

The protein localises to the cytoplasm. It catalyses the reaction urea + 2 H2O + H(+) = hydrogencarbonate + 2 NH4(+). It participates in nitrogen metabolism; urea degradation; CO(2) and NH(3) from urea (urease route): step 1/1. This is Urease subunit gamma from Thermosynechococcus vestitus (strain NIES-2133 / IAM M-273 / BP-1).